A 560-amino-acid chain; its full sequence is Cytosolic purine 5'-nucleotidase (560 aa).

Asp52 functions as the Nucleophile in the catalytic mechanism. Positions 52 and 54 each coordinate IMP. Residues Asp52 and Asp54 each coordinate Mg(2+). Catalysis depends on Asp54, which acts as the Proton donor. The ATP site is built by Arg144 and Asn154. 7 residues coordinate IMP: Arg202, Asp206, Lys215, Thr249, Asn250, Ser251, and Lys292. Asp351 contributes to the Mg(2+) binding site. Ser418 is modified (phosphoserine). Gln453 and Arg456 together coordinate ATP. A phosphoserine mark is found at Ser502, Ser511, and Ser527. The segment at 541-560 (PQEITHCHDEDDDEEEEEEE) is disordered. Residues 548–560 (HDEDDDEEEEEEE) form a required for tetramer assembly region. Positions 550–560 (EDDDEEEEEEE) are enriched in acidic residues.

It belongs to the 5'(3')-deoxyribonucleotidase family. In terms of assembly, homotetramer. Mg(2+) serves as cofactor.

The protein resides in the cytoplasm. The protein localises to the cytosol. It catalyses the reaction a ribonucleoside 5'-phosphate + H2O = a ribonucleoside + phosphate. The catalysed reaction is a 2'-deoxyribonucleoside + a ribonucleoside 5'-phosphate = a ribonucleoside + a 2'-deoxyribonucleoside 5'-phosphate. The enzyme catalyses IMP + H2O = inosine + phosphate. It carries out the reaction GMP + H2O = guanosine + phosphate. It catalyses the reaction dGMP + H2O = 2'-deoxyguanosine + phosphate. The catalysed reaction is dIMP + H2O = 2'-deoxyinosine + phosphate. The enzyme catalyses XMP + H2O = xanthosine + phosphate. It carries out the reaction inosine + GMP = guanosine + IMP. It catalyses the reaction dGMP + inosine = 2'-deoxyguanosine + IMP. The catalysed reaction is dIMP + inosine = 2'-deoxyinosine + IMP. The enzyme catalyses inosine + UMP = uridine + IMP. It carries out the reaction inosine + CMP = cytidine + IMP. It catalyses the reaction inosine + AMP = IMP + adenosine. With respect to regulation, allosterically activated by various compounds including ATP, 2,3-BPG/2,3-Bisphosphoglyceric acid and Ap4A/P1,P4-bis(5'-adenosyl) tetraphosphate. Binding of an allosteric activator is a prerequisiste to magnesium and substrate binding. Inhibited by inorganic phosphate. Functionally, broad specificity cytosolic 5'-nucleotidase that catalyzes the dephosphorylation of 6-hydroxypurine nucleoside 5'-monophosphates. In addition, possesses a phosphotransferase activity by which it can transfer a phosphate from a donor nucleoside monophosphate to an acceptor nucleoside, preferably inosine, deoxyinosine and guanosine. Has the highest activities for IMP and GMP followed by dIMP, dGMP and XMP. Could also catalyze the transfer of phosphates from pyrimidine monophosphates but with lower efficiency. Through these activities regulates the purine nucleoside/nucleotide pools within the cell. In Mus musculus (Mouse), this protein is Cytosolic purine 5'-nucleotidase.